The chain runs to 586 residues: MAASSEEETDRRPIRRVRSKSDTPYLAEVRISLNLETAEEVERLAAMRSDSLVPGTHTPPIRRRSKFATLGRLFKPWKWRKKKSEKFKQTSAALERKISMRQSREELIKRGVLKEMYDKDGDLHNEEGLMENGQAVSSGSSSLPIITELELTSMAGDTCAYEVLPTSELMDGTVSEDLSSEPGSLSQDPSYKPAMLLPPKKTVGFPVDQEDTPVKQITLLKQPPALPPKPISRIANHIADSGAPVKLPCMPGKMSPPLPPKKVMICMPLGGTDFPYGPYSNQKSSQHHHTVLPSQLAAHQLQYGSQHFSTGSSSISIHPSIPPGCRVIEELNKTLAMTMQRLESSGLHGGESITKSGLSGYCDMRQVPTVVIECEDDKENVPHETSYDDSSCLYSRDEEEDDDDDDDDEDDDSSLYTNSLALKVLRKDSLAIKLSNRPSKRELEEKNILPMQTDEERLESRQQIGTKLTRRLSQRPTAEELEQRNILKPRNEQEEQEEKREIKRRLTRKLSQRPTVEELREKKILISFSDYVELADAQDYDRRADKPWTRLTAADKAAIRKELNEFKSTEMEVHELSRHLTRFHRP.

Residues 62-83 (RRRSKFATLGRLFKPWKWRKKK) carry the Nuclear localization signal motif. Residues 92–117 (AALERKISMRQSREELIKRGVLKEMY) form an RPEL 1 repeat. The interval 373–414 (ECEDDKENVPHETSYDDSSCLYSRDEEEDDDDDDDDEDDDSS) is disordered. Residues 397 to 413 (DEEEDDDDDDDDEDDDS) are compositionally biased toward acidic residues. RPEL repeat units follow at residues 428-453 (DSLAIKLSNRPSKRELEEKNILPMQT), 466-491 (TKLTRRLSQRPTAEELEQRNILKPRN), and 504-529 (RRLTRKLSQRPTVEELREKKILISFS).

The protein belongs to the phosphatase and actin regulator family. Interacts (via RPEL repeats) with ACTA1.

Its subcellular location is the cytoplasm. The protein localises to the synapse. The protein resides in the nucleus. In terms of biological role, binds actin monomers (G actin) and plays a role in the reorganization of the actin cytoskeleton and in formation of actin stress fibers. The protein is Phosphatase and actin regulator 1 (phactr1) of Xenopus laevis (African clawed frog).